The chain runs to 48 residues: Large ribosomal subunit protein bL33A (48 aa).

This sequence belongs to the bacterial ribosomal protein bL33 family.

In Limosilactobacillus fermentum (strain NBRC 3956 / LMG 18251) (Lactobacillus fermentum), this protein is Large ribosomal subunit protein bL33A.